The chain runs to 380 residues: O-phospho-L-seryl-tRNA:Cys-tRNA synthase (380 aa).

Residues 86–87, Asn-192, and 215–217 each bind pyridoxal 5'-phosphate; these read AR and SGH. Lys-218 carries the N6-(pyridoxal phosphate)lysine modification.

It belongs to the SepCysS family. Homodimer. Interacts with SepRS. Pyridoxal 5'-phosphate is required as a cofactor.

It catalyses the reaction O-phospho-L-seryl-tRNA(Cys) + hydrogen sulfide + H(+) = L-cysteinyl-tRNA(Cys) + phosphate. Its function is as follows. Converts O-phospho-L-seryl-tRNA(Cys) (Sep-tRNA(Cys)) to L-cysteinyl-tRNA(Cys) (Cys-tRNA(Cys)). The chain is O-phospho-L-seryl-tRNA:Cys-tRNA synthase from Methanococcus maripaludis (strain C7 / ATCC BAA-1331).